A 192-amino-acid polypeptide reads, in one-letter code: uncharacterized protein (192 aa).

The Nudix hydrolase domain occupies 29 to 160; sequence HRQAAVLIPI…PLDIYRRGDS (132 aa). The short motif at 67-89 is the Nudix box element; sequence GAVDDTDTSVIAAALREAEEEVA. Mg(2+)-binding residues include Glu-83 and Glu-87.

The protein belongs to the Nudix hydrolase family. PCD1 subfamily. The cofactor is Mn(2+). It depends on Mg(2+) as a cofactor.

Functionally, probably mediates the hydrolysis of some nucleoside diphosphate derivatives. This is an uncharacterized protein from Escherichia coli O7:K1 (strain IAI39 / ExPEC).